The sequence spans 439 residues: Potassium/proton antiporter CemA (439 aa).

Helical transmembrane passes span 55-75 (IMLY…WSLL), 79-99 (ISLF…NFFN), 220-240 (YMLF…IWFL), 317-337 (LLHL…FILG), 364-384 (ILLL…EIVI), and 399-419 (IISC…KYWI).

It belongs to the CemA family.

It localises to the plastid. It is found in the chloroplast inner membrane. The enzyme catalyses K(+)(in) + H(+)(out) = K(+)(out) + H(+)(in). Its function is as follows. Contributes to K(+)/H(+) antiport activity by supporting proton efflux to control proton extrusion and homeostasis in chloroplasts in a light-dependent manner to modulate photosynthesis. Prevents excessive induction of non-photochemical quenching (NPQ) under continuous-light conditions. Indirectly promotes efficient inorganic carbon uptake into chloroplasts. This is Potassium/proton antiporter CemA from Physcomitrium patens (Spreading-leaved earth moss).